A 458-amino-acid chain; its full sequence is Retinoic acid receptor gamma (458 aa).

The segment at 1 to 89 is modulating; the sequence is MATNKERLFA…PPPPPRVYKP (89 aa). The residue at position 34 (arginine 34) is an Omega-N-methylarginine. A disordered region spans residues 58 to 83; the sequence is MASLSVETQSTSSEEMVPSSPSPPPP. Polar residues predominate over residues 62 to 71; it reads SVETQSTSSE. 2 consecutive NR C4-type zinc fingers follow at residues 90-110 and 126-150; these read CFVC…CEGC and CHRD…LQKC. The segment at residues 90 to 155 is a DNA-binding region (nuclear receptor); sequence CFVCNDKSSG…RLQKCFEVGM (66 aa). Residues 156 to 184 are hinge; the sequence is SKEAVRNDRNKKKKEVKEEGSPDSYELSP. The interval 161–180 is disordered; sequence RNDRNKKKKEVKEEGSPDSY. Residues lysine 172 and lysine 401 each participate in a glycyl lysine isopeptide (Lys-Gly) (interchain with G-Cter in SUMO2) cross-link. The NR LBD domain occupies 185-419; sequence QLEELITKVS…PLIREMLENP (235 aa). The disordered stretch occupies residues 409 to 458; that stretch reads PPLIREMLENPEMFEDDSSKPGPHPKASSEDEAPGGQGKRGQSPQPDQGP. Residues 448–458 show a composition bias toward polar residues; it reads RGQSPQPDQGP.

This sequence belongs to the nuclear hormone receptor family. NR1 subfamily. As to quaternary structure, homodimer. Heterodimer with a RXR molecule. Binds DNA preferentially as a RAR/RXR heterodimer. Forms a complex with PUS1 and the SRA1 RNA in the nucleus.

The protein localises to the nucleus. It is found in the cytoplasm. Its function is as follows. Receptor for retinoic acid. Retinoic acid receptors bind as heterodimers to their target response elements in response to their ligands, all-trans or 9-cis retinoic acid, and regulate gene expression in various biological processes. The RAR/RXR heterodimers bind to the retinoic acid response elements (RARE) composed of tandem 5'-AGGTCA-3' sites known as DR1-DR5. In the absence of ligand, acts mainly as an activator of gene expression due to weak binding to corepressors. Required for limb bud development. In concert with RARA or RARB, required for skeletal growth, matrix homeostasis and growth plate function. The chain is Retinoic acid receptor gamma (Rarg) from Mus musculus (Mouse).